We begin with the raw amino-acid sequence, 651 residues long: Probable potassium transport system protein Kup (651 aa).

A compositionally biased stretch (basic and acidic residues) spans 1 to 16; it reads MRDSPGSKSSSERWHD. Residues 1–31 form a disordered region; sequence MRDSPGSKSSSERWHDTMAVSDPTAEGKDES. The next 12 membrane-spanning stretches (helical) occupy residues 38–58, 74–94, 129–149, 168–188, 197–217, 232–252, 276–296, 309–329, 366–386, 396–416, 423–443, and 448–468; these read FWAL…TSPL, VTPA…FIVV, LLLL…SMIT, LQDY…AVQS, AFAP…VLHI, AIHF…LVFL, WFCL…ALIL, LAPA…TVIA, IYLP…VLLF, YGIA…VVVW, PAAA…FFSA, and LFDG…LIWT.

It belongs to the HAK/KUP transporter (TC 2.A.72) family.

It is found in the cell inner membrane. The catalysed reaction is K(+)(in) + H(+)(in) = K(+)(out) + H(+)(out). Transport of potassium into the cell. Likely operates as a K(+):H(+) symporter. The protein is Probable potassium transport system protein Kup of Nitrobacter winogradskyi (strain ATCC 25391 / DSM 10237 / CIP 104748 / NCIMB 11846 / Nb-255).